The sequence spans 326 residues: ATP synthase gamma chain (326 aa).

This sequence belongs to the ATPase gamma chain family. F-type ATPases have 2 components, CF(1) - the catalytic core - and CF(0) - the membrane proton channel. CF(1) has five subunits: alpha(3), beta(3), gamma(1), delta(1), epsilon(1). CF(0) has three main subunits: a, b and c.

Its subcellular location is the cell membrane. Its function is as follows. Produces ATP from ADP in the presence of a proton gradient across the membrane. The gamma chain is believed to be important in regulating ATPase activity and the flow of protons through the CF(0) complex. This chain is ATP synthase gamma chain, found in Corynebacterium efficiens (strain DSM 44549 / YS-314 / AJ 12310 / JCM 11189 / NBRC 100395).